The sequence spans 203 residues: Glycerol-3-phosphate acyltransferase (203 aa).

A run of 4 helical transmembrane segments spans residues 3 to 23 (LASA…AILV), 75 to 95 (LGLE…GHLF), 113 to 133 (VILG…LIVA), and 156 to 176 (LLTG…LIYW).

This sequence belongs to the PlsY family. In terms of assembly, probably interacts with PlsX.

It is found in the cell inner membrane. It carries out the reaction an acyl phosphate + sn-glycerol 3-phosphate = a 1-acyl-sn-glycero-3-phosphate + phosphate. The protein operates within lipid metabolism; phospholipid metabolism. Its function is as follows. Catalyzes the transfer of an acyl group from acyl-phosphate (acyl-PO(4)) to glycerol-3-phosphate (G3P) to form lysophosphatidic acid (LPA). This enzyme utilizes acyl-phosphate as fatty acyl donor, but not acyl-CoA or acyl-ACP. The sequence is that of Glycerol-3-phosphate acyltransferase from Thioalkalivibrio sulfidiphilus (strain HL-EbGR7).